We begin with the raw amino-acid sequence, 677 residues long: Mitochondrial disaggregase (677 aa).

Residues 1–57 (MMLSAVLRRTAPAPRLFLGLIKSPSLQSRGGAYNRSVITGDRGEPQRLRTAAWVRPG) constitute a mitochondrion transit peptide. Positions 64–103 (PGRGAATGGRRGERTEIPYLTAASSGRGPSPEETLPGQDS) are disordered. Residues 92–126 (PSPEETLPGQDSWNGVPNKAGLGMWALAMALVVQC) form an autoinhibitory region. ANK repeat units follow at residues 133–162 (NKDAALMEAARANNVQEVRRLLSEGADVNA), 166–195 (LGWTALMVAAISHNESVVQVLLAAGADPNL), 235–265 (KGCTALHYAVLADDYSIVKELLGGGANPLQR), and 268–297 (MGHTPLDYAREGEVMKLLKTSETKYMEKQR). Positions 316, 318, 353, 354, 355, 356, 357, 358, 425, and 466 each coordinate ATP. Residues 477–505 (LQLRQEALEMSRNRIAENLGDVQISDKIT) are regulatory; slows ATPase and disaggregase activities. ATP is bound at residue Arg531. At Lys559 the chain carries N6-acetyllysine. Arg590 serves as a coordination point for ATP.

It belongs to the ClpA/ClpB family. Homododecamer when substrate-bound; the homododecamer consists of 2 homohexamers stacked head-to-head via ANK repeat-mediated interactions. The active substrate-bound form is likely to exist in a dynamic equilibrium between homohexamers and homododecamers. Homotetradecamer in the unbound state which is remodeled upon substrate binding into the homododecamer. Interacts with PHB and PHB2. Interacts with MAVS; the interaction is enhanced by Sendai virus infection. In terms of processing, proteolytically cleaved by protease PARL. ATP-dependent protein disaggregase activity is stimulated by PARL-mediated cleavage of the N-terminal autoinhibitory peptide.

It is found in the mitochondrion intermembrane space. The enzyme catalyses ATP + H2O = ADP + phosphate + H(+). Its activity is regulated as follows. Disaggregase activity is inhibited by ADP. In terms of biological role, functions as a regulatory ATPase and participates in secretion/protein trafficking process. Has ATP-dependent protein disaggregase activity and is required to maintain the solubility of key mitochondrial proteins. Involved in mitochondrial-mediated antiviral innate immunity, activates RIG-I-mediated signal transduction and production of IFNB1 and pro-inflammatory cytokine IL6. Plays a role in granulocyte differentiation. In Rattus norvegicus (Rat), this protein is Mitochondrial disaggregase.